Consider the following 436-residue polypeptide: MNTERTMAGGPAPMRDGRRDTEIRNYVMNLGPQHPAAHGVLRLVLEMDGETVVRADPHVGLLHRGTEKLAESKPFNQSIGYMDRLDYVSMMCNEHAYVRAIETLLGIEAPIRAQYIRTMFDEITRILNHLMNIGTGALDLGAMAVMLYAFREREELMDCYEAVSGARMHATYYRPGGVYRELPEQMPKYKESRWKTGKQLRRLNAAREGSLLDFIENFTREFPNRIDEYETLLTDNRIWKQRTVGIGVVSPQQAMEWGMTGVMLRGSGVAWDLRKKRPYAKYDAVDFDIPVGTAGDCYDRYLCRVAEMRQSNRIIRQCVDWLRANPGPVMLHNFKVAPPSRQEMKSDMEALIHHFKLFSEGYQVPAGETYAAVEAPKGEFGCYLISDGANKPFRVHLRAPGFAHLSSLDEIVRGHMLADVVAMIGTYDIVFGEVDR.

It belongs to the complex I 49 kDa subunit family. As to quaternary structure, NDH-1 is composed of 14 different subunits. Subunits NuoB, C, D, E, F, and G constitute the peripheral sector of the complex.

The protein localises to the cell inner membrane. The enzyme catalyses a quinone + NADH + 5 H(+)(in) = a quinol + NAD(+) + 4 H(+)(out). In terms of biological role, NDH-1 shuttles electrons from NADH, via FMN and iron-sulfur (Fe-S) centers, to quinones in the respiratory chain. The immediate electron acceptor for the enzyme in this species is believed to be ubiquinone. Couples the redox reaction to proton translocation (for every two electrons transferred, four hydrogen ions are translocated across the cytoplasmic membrane), and thus conserves the redox energy in a proton gradient. The chain is NADH-quinone oxidoreductase subunit D 1 from Stenotrophomonas maltophilia (strain R551-3).